Reading from the N-terminus, the 202-residue chain is Pyridoxal 5'-phosphate synthase subunit PdxT (202 aa).

49–51 (GES) lines the L-glutamine pocket. Cysteine 81 functions as the Nucleophile in the catalytic mechanism. L-glutamine contacts are provided by residues arginine 110 and 139–140 (IR). Active-site charge relay system residues include histidine 182 and glutamate 184.

It belongs to the glutaminase PdxT/SNO family. As to quaternary structure, in the presence of PdxS, forms a dodecamer of heterodimers. Only shows activity in the heterodimer.

The catalysed reaction is aldehydo-D-ribose 5-phosphate + D-glyceraldehyde 3-phosphate + L-glutamine = pyridoxal 5'-phosphate + L-glutamate + phosphate + 3 H2O + H(+). It catalyses the reaction L-glutamine + H2O = L-glutamate + NH4(+). The protein operates within cofactor biosynthesis; pyridoxal 5'-phosphate biosynthesis. Catalyzes the hydrolysis of glutamine to glutamate and ammonia as part of the biosynthesis of pyridoxal 5'-phosphate. The resulting ammonia molecule is channeled to the active site of PdxS. This is Pyridoxal 5'-phosphate synthase subunit PdxT from Rhodococcus opacus (strain B4).